A 571-amino-acid polypeptide reads, in one-letter code: Polypeptide N-acetylgalactosaminyltransferase 2 (571 aa).

The Cytoplasmic portion of the chain corresponds to 1–6 (MRRRSR). Residues 7–24 (MLLCFAFLWVLGIAYYMY) form a helical; Signal-anchor for type II membrane protein membrane-spanning segment. Over 25-571 (SGGGSALAGG…QWKFTLNLQQ (547 aa)) the chain is Lumenal. A glycan (O-linked (Xyl...) (chondroitin sulfate) serine) is linked at S29. The segment covering 53 to 66 (KKDLHHSNGEEKAQ) has biased composition (basic and acidic residues). The tract at residues 53 to 74 (KKDLHHSNGEEKAQSMETLPPG) is disordered. Cystine bridges form between C126-C354, C345-C423, C456-C473, and C496-C513. Residues 135–240 (LPATSVVITF…EHWLEPLLER (106 aa)) are catalytic subdomain A. Substrate is bound by residues T143, D176, and R201. D224 contributes to the Mn(2+) binding site. S225 lines the substrate pocket. H226 is a binding site for Mn(2+). Residues 300-362 (PIKTPMIAGG…PCSRVGHVFR (63 aa)) form a catalytic subdomain B region. W331 lines the substrate pocket. A Mn(2+)-binding site is contributed by H359. Residues R362, H365, and Y367 each contribute to the substrate site. Residues 443-566 (QDIAFGALQQ…PALSQQWKFT (124 aa)) form the Ricin B-type lectin domain. Residue S536 is modified to Phosphoserine. C539 and C555 are oxidised to a cystine.

The protein belongs to the glycosyltransferase 2 family. GalNAc-T subfamily. The cofactor is Mn(2+). Detected in urine (at protein level). Widely expressed.

It localises to the golgi apparatus. The protein resides in the golgi stack membrane. The protein localises to the secreted. It carries out the reaction L-seryl-[protein] + UDP-N-acetyl-alpha-D-galactosamine = a 3-O-[N-acetyl-alpha-D-galactosaminyl]-L-seryl-[protein] + UDP + H(+). It catalyses the reaction L-threonyl-[protein] + UDP-N-acetyl-alpha-D-galactosamine = a 3-O-[N-acetyl-alpha-D-galactosaminyl]-L-threonyl-[protein] + UDP + H(+). Its pathway is protein modification; protein glycosylation. Functionally, catalyzes the initial reaction in O-linked oligosaccharide biosynthesis, the transfer of an N-acetyl-D-galactosamine residue to a serine or threonine residue on the protein receptor. Has a broad spectrum of substrates for peptides such as EA2, Muc5AC, Muc1a, Muc1b. Probably involved in O-linked glycosylation of the immunoglobulin A1 (IgA1) hinge region. Involved in O-linked glycosylation of APOC-III, ANGPTL3 and PLTP. It participates in the regulation of HDL-C metabolism. In Homo sapiens (Human), this protein is Polypeptide N-acetylgalactosaminyltransferase 2 (GALNT2).